The following is a 346-amino-acid chain: Elongation factor Ts (346 aa).

Positions 80-83 are involved in Mg(2+) ion dislocation from EF-Tu; sequence TDFV.

It belongs to the EF-Ts family.

It localises to the cytoplasm. Associates with the EF-Tu.GDP complex and induces the exchange of GDP to GTP. It remains bound to the aminoacyl-tRNA.EF-Tu.GTP complex up to the GTP hydrolysis stage on the ribosome. This Streptococcus pneumoniae serotype 19F (strain G54) protein is Elongation factor Ts.